Consider the following 899-residue polypeptide: RNA-binding motif protein 25 (899 aa).

Residues 1 to 20 (MADESSSPATGDPNSQKPES) show a composition bias toward polar residues. Residues 1 to 112 (MADESSSPAT…SMPQYQPQPG (112 aa)) are disordered. The span at 26-63 (IPNPNPNPSLTPPPPQQHSQPPVAPLVPPGPPYAPPAQ) shows a compositional bias: pro residues. Positions 204 to 281 (TTIYIGKIAT…QELLVNVNQA (78 aa)) constitute an RRM domain. Disordered regions lie at residues 298–572 (KKAK…EQNL) and 611–778 (GESA…KESG). Basic and acidic residues-rich tracts occupy residues 317-340 (EQDKLESADNETGKDGESKIKENI) and 354-372 (EADREAMEKIETAIEERLK). Positions 375–384 (PLPPPPPPPA) are enriched in pro residues. Residues 430 to 505 (WSKRNDRRSR…QYEKEKEKEK (76 aa)) show a composition bias toward basic and acidic residues. Positions 434-578 (NDRRSRERGE…EQNLQQQQLD (145 aa)) form a coiled coil. Acidic residues predominate over residues 515–524 (YEEEEEEDDD). Residues 526 to 533 (SRRRWHRA) carry the Nuclear localization signal 1 motif. Basic and acidic residues predominate over residues 533–568 (AALDERRRRQLREKEDDLADRLKEEEEVAEAKRSAE). The span at 626-640 (GSGNESMAIDNNSGS) shows a compositional bias: polar residues. Basic and acidic residues-rich tracts occupy residues 723 to 733 (PKEETIETEKQ) and 740 to 778 (DKASHRDRERERERDRDRDRVRDRGDGHSGPTKDAKESG). The Nuclear localization signal 2 motif lies at 735 to 742 (SRRSHDKA). Positions 802–899 (EDLFSYEINW…EAGVPVKSKA (98 aa)) constitute a PWI domain.

Specifically associates with functional splicing complexes. Associates with exon junction complex (EJC) proteins. In terms of processing, phosphorylated; the phosphorylation level is repressed by abscisic acid (ABA).

It is found in the nucleus. RNA-binding protein that acts as a regulator of alternative pre-mRNA splicing. Negative regulator of responses to abscisic acid (ABA), including in early development. This Arabidopsis thaliana (Mouse-ear cress) protein is RNA-binding motif protein 25.